The primary structure comprises 563 residues: IQCJ-SCHIP1 readthrough transcript protein (563 aa).

Positions 47-67 (ESKVKIIQRAWREYLQRQEPL) constitute an IQ domain. 4 disordered regions span residues 63 to 150 (RQEP…VSAL), 164 to 295 (VIDE…EPPV), 312 to 336 (FREQEVRNQGQARTNSTSAQKNERE), and 384 to 430 (SGSD…SLDD). Low complexity predominate over residues 76 to 87 (SVSSEKLSSSVS). Residues 88 to 97 (MNTFSDSSTP) show a composition bias toward polar residues. Residues 108 to 143 (SDAGSSSSSSRASSQSNSTKVTPCSECKSSSSPGGS) show a composition bias toward low complexity. Acidic residues predominate over residues 168-182 (WAPEEDGEEEEEEDE). Composition is skewed to basic and acidic residues over residues 183–199 (RDQRGYRDDRSPAREPG) and 229–238 (HQHDPQDLRH). Position 193 is a phosphoserine (Ser-193). Positions 318–331 (RNQGQARTNSTSAQ) are enriched in polar residues. Positions 385–399 (GSDKDSDADDSKTET) are enriched in basic and acidic residues. Positions 400-411 (SLDTPLSPMSKQ) are enriched in polar residues. A required for interaction with ankyrins region spans residues 419 to 563 (DTTEEESESL…KHMAEKMPAK (145 aa)). The span at 420 to 430 (TTEEESESLDD) shows a compositional bias: acidic residues. The stretch at 500-534 (IGQLQVIVNDLHSQIESLNEELVQLLLIRDELHTE) forms a coiled coil.

Homooligomer (via coiled coil domain). Interacts (via IQ domain) with calmodulin; the interaction is direct and lost in presence of calcium. Interacts with ANK3 (via ANK repeats); required for localization at axon initial segments (AIS) and nodes of Ranvier. Interacts with SPTBN4. Interacts with KCNQ2 and KCNQ3. As to expression, highly expressed in brain and to a lower extent in heart and kidney.

The protein resides in the cell projection. The protein localises to the axon. It localises to the cytoplasm. Functionally, may play a role in action potential conduction in myelinated cells through the organization of molecular complexes at nodes of Ranvier and axon initial segments. May also play a role in axon outgrowth and guidance. The protein is IQCJ-SCHIP1 readthrough transcript protein of Homo sapiens (Human).